A 307-amino-acid chain; its full sequence is Glycine--tRNA ligase alpha subunit (307 aa).

It belongs to the class-II aminoacyl-tRNA synthetase family. Tetramer of two alpha and two beta subunits.

The protein resides in the cytoplasm. The catalysed reaction is tRNA(Gly) + glycine + ATP = glycyl-tRNA(Gly) + AMP + diphosphate. The polypeptide is Glycine--tRNA ligase alpha subunit (Levilactobacillus brevis (strain ATCC 367 / BCRC 12310 / CIP 105137 / JCM 1170 / LMG 11437 / NCIMB 947 / NCTC 947) (Lactobacillus brevis)).